A 77-amino-acid polypeptide reads, in one-letter code: MAPSALLRPVSRLLAPARLPSGRASARSKFYVREPLNAKPDWLKVGFTLGTTVFLWVYLIKQHNEDILECKRRNGLE.

Residues 1 to 28 constitute a mitochondrion transit peptide; sequence MAPSALLRPVSRLLAPARLPSGRASARS. The chain crosses the membrane as a helical span at residues 42–60; the sequence is WLKVGFTLGTTVFLWVYLI.

It belongs to the complex I NDUFC1 subunit family. Complex I is composed of 45 different subunits.

It localises to the mitochondrion inner membrane. In terms of biological role, accessory subunit of the mitochondrial membrane respiratory chain NADH dehydrogenase (Complex I), that is believed not to be involved in catalysis. Complex I functions in the transfer of electrons from NADH to the respiratory chain. The immediate electron acceptor for the enzyme is believed to be ubiquinone. The protein is NADH dehydrogenase [ubiquinone] 1 subunit C1, mitochondrial (NDUFC1) of Pongo abelii (Sumatran orangutan).